The primary structure comprises 388 residues: Succinate--CoA ligase [ADP-forming] subunit beta (388 aa).

One can recognise an ATP-grasp domain in the interval 9–244 (KQLFARYGLP…PSQEDPREAQ (236 aa)). ATP is bound by residues Lys46, 53 to 55 (GRG), Glu99, Thr102, and Glu107. Residues Asn199 and Asp213 each contribute to the Mg(2+) site. Substrate-binding positions include Asn264 and 321–323 (GIV).

The protein belongs to the succinate/malate CoA ligase beta subunit family. Heterotetramer of two alpha and two beta subunits. Mg(2+) serves as cofactor.

The catalysed reaction is succinate + ATP + CoA = succinyl-CoA + ADP + phosphate. It carries out the reaction GTP + succinate + CoA = succinyl-CoA + GDP + phosphate. It functions in the pathway carbohydrate metabolism; tricarboxylic acid cycle; succinate from succinyl-CoA (ligase route): step 1/1. In terms of biological role, succinyl-CoA synthetase functions in the citric acid cycle (TCA), coupling the hydrolysis of succinyl-CoA to the synthesis of either ATP or GTP and thus represents the only step of substrate-level phosphorylation in the TCA. The beta subunit provides nucleotide specificity of the enzyme and binds the substrate succinate, while the binding sites for coenzyme A and phosphate are found in the alpha subunit. The polypeptide is Succinate--CoA ligase [ADP-forming] subunit beta (Photorhabdus laumondii subsp. laumondii (strain DSM 15139 / CIP 105565 / TT01) (Photorhabdus luminescens subsp. laumondii)).